The primary structure comprises 81 residues: Sulfur carrier protein TusA (81 aa).

Cys19 (cysteine persulfide intermediate) is an active-site residue.

Belongs to the sulfur carrier protein TusA family.

The protein resides in the cytoplasm. Sulfur carrier protein which probably makes part of a sulfur-relay system. The polypeptide is Sulfur carrier protein TusA (Shewanella oneidensis (strain ATCC 700550 / JCM 31522 / CIP 106686 / LMG 19005 / NCIMB 14063 / MR-1)).